Consider the following 143-residue polypeptide: Anti-sigma F factor (143 aa).

It belongs to the anti-sigma-factor family.

It catalyses the reaction L-seryl-[protein] + ATP = O-phospho-L-seryl-[protein] + ADP + H(+). The catalysed reaction is L-threonyl-[protein] + ATP = O-phospho-L-threonyl-[protein] + ADP + H(+). In terms of biological role, binds to sigma F and blocks its ability to form an RNA polymerase holoenzyme (E-sigma F). Phosphorylates SpoIIAA on a serine residue. This phosphorylation may enable SpoIIAA to act as an anti-anti-sigma factor that counteracts SpoIIAB and thus releases sigma F from inhibition. The polypeptide is Anti-sigma F factor (Clostridium novyi (strain NT)).